Reading from the N-terminus, the 610-residue chain is Glutamine--fructose-6-phosphate aminotransferase [isomerizing] (610 aa).

Cys-2 functions as the Nucleophile; for GATase activity in the catalytic mechanism. The Glutamine amidotransferase type-2 domain occupies 2–218 (CGIVGAVAQR…EGDIAEITRR (217 aa)). 2 SIS domains span residues 278–426 (IVDS…VKGH) and 459–600 (LAED…VDQP). The active-site For Fru-6P isomerization activity is the Lys-605.

Homodimer.

It localises to the cytoplasm. It carries out the reaction D-fructose 6-phosphate + L-glutamine = D-glucosamine 6-phosphate + L-glutamate. Catalyzes the first step in hexosamine metabolism, converting fructose-6P into glucosamine-6P using glutamine as a nitrogen source. The protein is Glutamine--fructose-6-phosphate aminotransferase [isomerizing] of Haemophilus influenzae (strain ATCC 51907 / DSM 11121 / KW20 / Rd).